A 722-amino-acid polypeptide reads, in one-letter code: Probable C-mannosyltransferase DPY19L4 (722 aa).

Residues 1–34 are disordered; sequence MAKEEGTSVEPRQRKKQRTSGSQEAKAEKIRRTP. A2 carries the post-translational modification N-acetylalanine. Residues 25-34 show a composition bias toward basic and acidic residues; that stretch reads AKAEKIRRTP. 12 helical membrane passes run 51-71, 160-177, 183-201, 246-262, 268-284, 291-307, 313-331, 351-369, 420-440, 465-485, 487-507, and 521-541; these read IVIGCLAAVISGMMHVFYLSA, VYFYIGIVFGLQGMYVTA, WLMSGTWLAGMLTVAWFLI, FCYLLLSTSTYTFMMVW, VLFLQAVSLLLLDIFSV, YEVYKVYIFSLFLGYLL, ALLVSPLLSLVGAFMLVKC, FYLLCTLPVTLNLIVKMFV, LLPFYVLVLIICLLSMTQVFF, IIYHVIHTLLLGSLAMLMEGL, FIWTPYVCMLAAFGVCSPELW, and PMLLALILSMAVPTIIGLSLW.

The protein belongs to the dpy-19 family.

The protein resides in the membrane. Probable C-mannosyltransferase that mediates C-mannosylation of tryptophan residues on target proteins. This chain is Probable C-mannosyltransferase DPY19L4 (Dpy19l4), found in Mus musculus (Mouse).